The primary structure comprises 183 residues: ATP synthase subunit b, chloroplastic (183 aa).

Residues 27–49 form a helical membrane-spanning segment; it reads LATNLINLTVVVGVLIFFGKGVL.

It belongs to the ATPase B chain family. In terms of assembly, F-type ATPases have 2 components, F(1) - the catalytic core - and F(0) - the membrane proton channel. F(1) has five subunits: alpha(3), beta(3), gamma(1), delta(1), epsilon(1). F(0) has four main subunits: a(1), b(1), b'(1) and c(10-14). The alpha and beta chains form an alternating ring which encloses part of the gamma chain. F(1) is attached to F(0) by a central stalk formed by the gamma and epsilon chains, while a peripheral stalk is formed by the delta, b and b' chains.

Its subcellular location is the plastid. It localises to the chloroplast thylakoid membrane. Functionally, f(1)F(0) ATP synthase produces ATP from ADP in the presence of a proton or sodium gradient. F-type ATPases consist of two structural domains, F(1) containing the extramembraneous catalytic core and F(0) containing the membrane proton channel, linked together by a central stalk and a peripheral stalk. During catalysis, ATP synthesis in the catalytic domain of F(1) is coupled via a rotary mechanism of the central stalk subunits to proton translocation. Component of the F(0) channel, it forms part of the peripheral stalk, linking F(1) to F(0). This Hordeum vulgare (Barley) protein is ATP synthase subunit b, chloroplastic.